Consider the following 549-residue polypeptide: Biotin-dependent acetyl-/propionyl-coenzyme A carboxylase beta5 subunit (549 aa).

Residues threonine 25 to serine 281 form the CoA carboxyltransferase N-terminal domain. Positions alanine 295–lysine 542 constitute a CoA carboxyltransferase C-terminal domain.

Belongs to the AccD/PCCB family. In terms of assembly, the biotin-dependent acyl-CoA carboxylase complex is composed of AccA3, which contains the biotin carboxylase (BC) and biotin carboxyl carrier protein (BCCP) domains, and AccD5, which contains the carboxyl transferase (CT) domain.

It catalyses the reaction N(6)-carboxybiotinyl-L-lysyl-[protein] + acetyl-CoA = N(6)-biotinyl-L-lysyl-[protein] + malonyl-CoA. The enzyme catalyses N(6)-carboxybiotinyl-L-lysyl-[protein] + propanoyl-CoA = methylmalonyl-CoA + N(6)-biotinyl-L-lysyl-[protein]. The protein operates within lipid metabolism; mycolic acid biosynthesis. Functionally, component of a biotin-dependent acyl-CoA carboxylase complex. This subunit transfers the CO2 from carboxybiotin to the CoA ester substrate. When associated with the alpha3 subunit AccA3, is involved in the carboxylation of acetyl-CoA and propionyl-CoA. This is Biotin-dependent acetyl-/propionyl-coenzyme A carboxylase beta5 subunit (accD5) from Mycobacterium leprae (strain TN).